Consider the following 148-residue polypeptide: Ribosomal RNA large subunit methyltransferase H (148 aa).

Residues Leu62, Gly94, and 113-118 each bind S-adenosyl-L-methionine; that span reads LSLLTL.

Belongs to the RNA methyltransferase RlmH family. As to quaternary structure, homodimer.

It localises to the cytoplasm. It carries out the reaction pseudouridine(1915) in 23S rRNA + S-adenosyl-L-methionine = N(3)-methylpseudouridine(1915) in 23S rRNA + S-adenosyl-L-homocysteine + H(+). Functionally, specifically methylates the pseudouridine at position 1915 (m3Psi1915) in 23S rRNA. This Deinococcus geothermalis (strain DSM 11300 / CIP 105573 / AG-3a) protein is Ribosomal RNA large subunit methyltransferase H.